The chain runs to 232 residues: Mitochondrial import inner membrane translocase subunit Tim21 (232 aa).

The transit peptide at 1-31 directs the protein to the mitochondrion; that stretch reads MLPRFLWRPVLCSYRALGSPSRSLTVSYRNL. Residues 96–116 traverse the membrane as a helical segment; it reads FTYFIVVLIGIGVTGGLFYVV.

The protein belongs to the TIM21 family.

It localises to the mitochondrion membrane. May participate in the translocation of transit peptide-containing proteins across the mitochondrial inner membrane. The protein is Mitochondrial import inner membrane translocase subunit Tim21 (timm21) of Xenopus laevis (African clawed frog).